The primary structure comprises 114 residues: Large ribosomal subunit protein uL22 (114 aa).

Belongs to the universal ribosomal protein uL22 family. Part of the 50S ribosomal subunit.

Functionally, this protein binds specifically to 23S rRNA; its binding is stimulated by other ribosomal proteins, e.g. L4, L17, and L20. It is important during the early stages of 50S assembly. It makes multiple contacts with different domains of the 23S rRNA in the assembled 50S subunit and ribosome. In terms of biological role, the globular domain of the protein is located near the polypeptide exit tunnel on the outside of the subunit, while an extended beta-hairpin is found that lines the wall of the exit tunnel in the center of the 70S ribosome. The chain is Large ribosomal subunit protein uL22 from Ehrlichia chaffeensis (strain ATCC CRL-10679 / Arkansas).